The sequence spans 238 residues: Ribose-5-phosphate isomerase A (238 aa).

Residues 30 to 33, 87 to 90, and 100 to 103 each bind substrate; these read SGST, DGAD, and KGGG. The Proton acceptor role is filled by Glu-109. Residue Lys-127 participates in substrate binding.

This sequence belongs to the ribose 5-phosphate isomerase family. As to quaternary structure, homodimer.

It catalyses the reaction aldehydo-D-ribose 5-phosphate = D-ribulose 5-phosphate. It participates in carbohydrate degradation; pentose phosphate pathway; D-ribose 5-phosphate from D-ribulose 5-phosphate (non-oxidative stage): step 1/1. Functionally, catalyzes the reversible conversion of ribose-5-phosphate to ribulose 5-phosphate. The chain is Ribose-5-phosphate isomerase A from Prochlorococcus marinus (strain MIT 9303).